The sequence spans 494 residues: Serine/threonine-protein kinase PBL13 (494 aa).

C4 is lipidated: S-palmitoyl cysteine. Position 65 is a phosphothreonine (T65). Residues 76–356 enclose the Protein kinase domain; sequence FSSSNFLGEG…STVVSVLQDI (281 aa). ATP is bound by residues 82-90 and K111; that span reads LGEGGFGPV. Y156 bears the Phosphotyrosine mark. The active-site Proton acceptor is the D206. S210 carries the post-translational modification Phosphoserine. At S240 the chain carries Phosphoserine; by autocatalysis. A phosphothreonine mark is found at T241 and T246. Y254 bears the Phosphotyrosine mark. S321 carries the phosphoserine; by autocatalysis modification. T323 and T383 each carry phosphothreonine; by autocatalysis. S384 carries the post-translational modification Phosphoserine; by autocatalysis. T395, T398, T406, T413, T421, and T428 each carry phosphothreonine; by autocatalysis. S429 is subject to Phosphoserine; by autocatalysis. A disordered region spans residues 434-471; the sequence is DKTRREVKETSLQNFDKPRNVSTTDNHQKFRSPAHTAR. T443 carries the phosphothreonine; by autocatalysis modification. Over residues 443–458 the composition is skewed to polar residues; sequence TSLQNFDKPRNVSTTD. Residues S444 and S455 each carry the phosphoserine; by autocatalysis modification. T456 carries the post-translational modification Phosphothreonine; by autocatalysis. Residues 462-471 are compositionally biased toward basic residues; it reads KFRSPAHTAR. The residue at position 481 (Y481) is a Phosphotyrosine; by autocatalysis.

It belongs to the protein kinase superfamily. Ser/Thr protein kinase family. As to quaternary structure, interacts with RBHOD. Interaction is disrupted by flagellin-induced immune signaling.

It localises to the cell membrane. It catalyses the reaction L-seryl-[protein] + ATP = O-phospho-L-seryl-[protein] + ADP + H(+). It carries out the reaction L-threonyl-[protein] + ATP = O-phospho-L-threonyl-[protein] + ADP + H(+). Its function is as follows. Involved in defense responses. Acts as a negative regulator of plant immune responses. The polypeptide is Serine/threonine-protein kinase PBL13 (Arabidopsis thaliana (Mouse-ear cress)).